A 531-amino-acid polypeptide reads, in one-letter code: Chaperonin GroEL, chloroplastic (531 aa).

Residues 30–33 (TLGP), 87–91 (DGTTT), Gly415, 481–483 (NAA), and Asp497 each bind ATP.

This sequence belongs to the chaperonin (HSP60) family. Forms a cylinder of 14 subunits composed of two heptameric rings stacked back-to-back. Interacts with the co-chaperonin GroES.

It is found in the plastid. Its subcellular location is the chloroplast. The enzyme catalyses ATP + H2O + a folded polypeptide = ADP + phosphate + an unfolded polypeptide.. Its function is as follows. Together with its co-chaperonin GroES, plays an essential role in assisting protein folding. The GroEL-GroES system forms a nano-cage that allows encapsulation of the non-native substrate proteins and provides a physical environment optimized to promote and accelerate protein folding. The polypeptide is Chaperonin GroEL, chloroplastic (Emiliania huxleyi (Coccolithophore)).